The following is a 717-amino-acid chain: Homeobox protein araucan (717 aa).

7 disordered regions span residues 46-80 (APAM…PNAL), 94-130 (GGSS…GGGG), 317-371 (NKMT…AIDE), 395-418 (SGGY…YHHQ), 478-516 (TPPP…AGRD), 549-615 (TNNS…ASQR), and 675-717 (ARLG…KFTN). Residues 94–103 (GGSSAGGGGP) are compositionally biased toward gly residues. Residues 255–317 (LAARRKNATR…NARRRLKKEN (63 aa)) constitute a DNA-binding region (homeobox; TALE-type). The span at 317–327 (NKMTWEPKNRT) shows a compositional bias: basic and acidic residues. S336 carries the post-translational modification Phosphoserine. Residues 337-347 (DDEKDKEDLEP) are compositionally biased toward basic and acidic residues. Gly residues predominate over residues 395 to 410 (SGGYPGGGGSSSGHPG). Composition is skewed to low complexity over residues 492–507 (QQQQ…AQHQ), 559–589 (PPQQ…GPII), 599–614 (QQQQ…TASQ), and 687–698 (SSGNSSSSSSSS).

It belongs to the TALE/IRO homeobox family.

The protein localises to the nucleus. Functionally, controls proneural and vein forming genes. Positive transcriptional controller of AC-SC (achaete-scute). May act as an activator that interacts with the transcriptional complex assembled on the AC and SC promoters and participates in transcription initiation. The polypeptide is Homeobox protein araucan (ara) (Drosophila melanogaster (Fruit fly)).